We begin with the raw amino-acid sequence, 466 residues long: MQGKNNLSCRPDTEDNEELFVDDQLLSPIGDSKNTSSFIYLGNPISFHEYNYDETMVSPENVKTAIAGSAKDHETCRGFKKTGTTSYKDFVFSRDYTNWTPTFWVLLSQLIDEFLKESELNFVAARDLLIKTKRLPKPFNNLLIQFQIQVPNVSRRTVYRHLKGYFNIPGYERFQYVKKASSGSWGANDIITLEKEIAMFKKKKNWSDEQFLQYVWSDNHRDEMKTLYNCLYELIDRDKKSIYNYLRRKYNPFKKKCKWTIEDEAELKKLVEKHGTSWSLIGKLSNRLPMHCRDHWRDYIQPGEINRSPWTIQEKEKLIKTVNQYLQSNPSSPIQWSLISKNMRNRHRHHCRWKYYTLISRDIHNSSPFKLGDSIWLIERMMDLNVAEERMIDWKCLSEYANHLWTADACKSHFERIKKTLFIDGLSTFSDTLIHLHKMLNSSPEETYISNLHDSYTAFSNADDLC.

2 DNA-binding domain regions span residues 94 to 249 (RDYT…LRRK) and 250 to 421 (YNPF…KKTL). HTH myb-type domains lie at 251–304 (NPFK…QPGE) and 305–363 (INRS…SRDI). 2 consecutive DNA-binding regions (H-T-H motif) follow at residues 278-300 (WSLI…RDYI) and 336-359 (WSLI…YTLI).

Its subcellular location is the nucleus. Mediates site-specific replication termination at the polar replication barrier RTS1, a barrier which ensures that replication of the mat1 locus in S.pombe occurs in the centromere-proximal direction. The protein is Replication termination factor 1 (rtf1) of Schizosaccharomyces pombe (strain 972 / ATCC 24843) (Fission yeast).